The primary structure comprises 197 residues: dITP/XTP pyrophosphatase (197 aa).

8-13 contributes to the substrate binding site; it reads TGNPGK. Glu40 and Asp69 together coordinate Mg(2+). Catalysis depends on Asp69, which acts as the Proton acceptor. Residues Ser70, 154–157, Lys177, and 182–183 contribute to the substrate site; these read FGYD and HR.

This sequence belongs to the HAM1 NTPase family. As to quaternary structure, homodimer. Requires Mg(2+) as cofactor.

It carries out the reaction XTP + H2O = XMP + diphosphate + H(+). The catalysed reaction is dITP + H2O = dIMP + diphosphate + H(+). The enzyme catalyses ITP + H2O = IMP + diphosphate + H(+). Pyrophosphatase that catalyzes the hydrolysis of nucleoside triphosphates to their monophosphate derivatives, with a high preference for the non-canonical purine nucleotides XTP (xanthosine triphosphate), dITP (deoxyinosine triphosphate) and ITP. Seems to function as a house-cleaning enzyme that removes non-canonical purine nucleotides from the nucleotide pool, thus preventing their incorporation into DNA/RNA and avoiding chromosomal lesions. The polypeptide is dITP/XTP pyrophosphatase (Yersinia pestis).